Consider the following 688-residue polypeptide: Polyribonucleotide nucleotidyltransferase (688 aa).

2 residues coordinate Mg(2+): D484 and D490. Positions 550–609 (PQTEIFNVAPDKIIEIIGQGGRVIKEIVEKFEVKIDLNTPSGEVKIMGNKERVLKTKEFI) constitute a KH domain. The S1 motif domain occupies 626 to 688 (DEVLEAQVKR…NKGKIALDLA (63 aa)).

This sequence belongs to the polyribonucleotide nucleotidyltransferase family. It depends on Mg(2+) as a cofactor.

It localises to the cytoplasm. It carries out the reaction RNA(n+1) + phosphate = RNA(n) + a ribonucleoside 5'-diphosphate. In terms of biological role, involved in mRNA degradation. Catalyzes the phosphorolysis of single-stranded polyribonucleotides processively in the 3'- to 5'-direction. The polypeptide is Polyribonucleotide nucleotidyltransferase (Helicobacter pylori (strain J99 / ATCC 700824) (Campylobacter pylori J99)).